The sequence spans 644 residues: Coiled-coil domain-containing protein 22 homolog (644 aa).

The disordered stretch occupies residues 316–341; sequence DEQKAAAMAGLSESGPPKMDTEEELQ. Coiled coils occupy residues 333-383, 409-486, and 592-644; these read KMDT…NEQV, DAEN…GKDD, and GVIM…LKSS.

Belongs to the CCDC22 family.

The sequence is that of Coiled-coil domain-containing protein 22 homolog from Nematostella vectensis (Starlet sea anemone).